The chain runs to 70 residues: Large ribosomal subunit protein eL43 (70 aa).

Residues Cys-36, Cys-39, Cys-55, and Cys-58 each contribute to the Zn(2+) site. Residues 36–58 form a C4-type zinc finger; that stretch reads CPYCKTTGKVIRLASGIWYCKKC.

It belongs to the eukaryotic ribosomal protein eL43 family. Putative zinc-binding subfamily. Part of the 50S ribosomal subunit. Zn(2+) is required as a cofactor.

In terms of biological role, binds to the 23S rRNA. The protein is Large ribosomal subunit protein eL43 of Saccharolobus solfataricus (strain ATCC 35092 / DSM 1617 / JCM 11322 / P2) (Sulfolobus solfataricus).